Consider the following 607-residue polypeptide: Bifunctional endo-1,4-beta-xylanase A (607 aa).

The N-terminal stretch at 1-18 is a signal peptide; sequence MRTIKFFFAVAIATVAKA. Residues 35–242 form the GH11 1 domain; the sequence is NGQTQHKGVA…SSGIADVTKL (208 aa). Glu-141 functions as the Nucleophile in the catalytic mechanism. Glu-223 (proton donor) is an active-site residue. Polar residues predominate over residues 248-272; it reads QKGSNPAPTSTGTVPSSSAGGSTAN. Residues 248–284 form a disordered region; sequence QKGSNPAPTSTGTVPSSSAGGSTANGKKFTVGNGQNQ. The GH11 2 domain maps to 280-487; that stretch reads NGQNQHKGVN…SSGVADVTLL (208 aa). Residue Glu-386 is the Nucleophile of the active site. Glu-474 functions as the Proton donor in the catalytic mechanism. Residues 493 to 514 form a disordered region; sequence PKGSSPATSAAPRTTTRTTTRT. Residues 496–514 are compositionally biased toward low complexity; that stretch reads SSPATSAAPRTTTRTTTRT. CBM10 domains lie at 523-563 and 566-606; these read KCSA…CGCG and QCSS…CGCG.

This sequence belongs to the glycosyl hydrolase 11 (cellulase G) family.

The catalysed reaction is Endohydrolysis of (1-&gt;4)-beta-D-xylosidic linkages in xylans.. Its pathway is glycan degradation; xylan degradation. Hydrolyzes xylans into xylobiose and xylose. The chain is Bifunctional endo-1,4-beta-xylanase A (XYNA) from Neocallimastix patriciarum (Rumen fungus).